Consider the following 596-residue polypeptide: MAKPKSNSHLSWQDYLKTVAPTQILSERGANLVVINLGSANVRVGLAMDEKPFNVPNCIARYITQSGKPTVVDQMLNTEVTTNQHVDRERAYNSAASLLKILFLDESSSSGSASRKMGRIDGYNQASTIKKDSVFTWTDVYEDEKISLASPAETSPDKGDASASEAVPDVTDSKDTSESKRKYRKMIFGEEALKISPKEPYCLYHPIRRGHFNVSPHYSAQRVCEDLTAILDWILLEKLHITHKERFSFHAVIVVPETFDTREIKEMLTIVLGELYFNSAVVHQEGLSAVFGNGLTTACIVNIGAQTSTVVCVEDGVSLPNTEKILPFGGEDICRCLLWIQRHYQKWPQINTDVLAKPIDMLMLNQLKESFCEIRAGELETVATVHSYEEGMPAVPHKTNLTSLNVPPMGLFYPNLLVPEIFPQPPRQWFQDYENMLEDTWNMDFGGGGNMGLPMWDSFAFSPSKPKKEEKIGLAEAITSSILSAGRIDLRRKLFSSIQLIGGAGLTKGLVAAVEERVLHAIPPTEAIDTVQVLPSRTEPQFVTWKGGAILGILDFGREAWIERHQWMVNGVNKGGLKKYKDSYHLQGQAMYFINP.

Residues leucine 148–glutamate 178 form a disordered region.

Belongs to the actin family. ARP8 subfamily.

This chain is Actin-related protein 9 (ARP9), found in Arabidopsis thaliana (Mouse-ear cress).